A 465-amino-acid polypeptide reads, in one-letter code: Branchpoint-bridging protein (465 aa).

Residues 1–11 (MSERREEERGR) show a composition bias toward basic and acidic residues. Positions 1–22 (MSERREEERGRTGFSMKKNHNS) are disordered. Residues 139–205 (YIPVSQYPQI…DFSDPLHCLI (67 aa)) enclose the KH domain. 2 consecutive CCHC-type zinc fingers follow at residues 257 to 274 (RPCA…ECPH) and 282 to 299 (IICR…DCTS). 2 disordered regions span residues 324-391 (AVDQ…LSHQ) and 431-465 (INDV…PGLN). Composition is skewed to polar residues over residues 339–361 (RNHN…NKRA) and 377–391 (QINP…LSHQ).

The protein belongs to the BBP/SF1 family.

The protein localises to the nucleus. Necessary for the splicing of pre-mRNA. Has a role in the recognition of the branch site (5'-UACUAAC-3'), the pyrimidine tract and the 3'-splice site at the 3'-end of introns. In Candida glabrata (strain ATCC 2001 / BCRC 20586 / JCM 3761 / NBRC 0622 / NRRL Y-65 / CBS 138) (Yeast), this protein is Branchpoint-bridging protein (BBP).